The chain runs to 207 residues: Ribosomal RNA small subunit methyltransferase G (207 aa).

S-adenosyl-L-methionine is bound by residues Gly-73, Leu-78, Val-124 to Glu-125, and Arg-139.

This sequence belongs to the methyltransferase superfamily. RNA methyltransferase RsmG family.

It localises to the cytoplasm. The catalysed reaction is guanosine(527) in 16S rRNA + S-adenosyl-L-methionine = N(7)-methylguanosine(527) in 16S rRNA + S-adenosyl-L-homocysteine. In terms of biological role, specifically methylates the N7 position of guanine in position 527 of 16S rRNA. The sequence is that of Ribosomal RNA small subunit methyltransferase G from Shigella dysenteriae serotype 1 (strain Sd197).